The primary structure comprises 472 residues: uncharacterized protein (472 aa).

6 helical membrane-spanning segments follow: residues 4-24, 27-47, 56-76, 99-119, 140-160, and 176-196; these read IIILLALGLLMFTAYRGFSVI, APICALFAVLLTDPSHVLPFF, AGFIKLYFPVFLLGAIFGKVV, ILAIVLMGAVLTYSGVSLFVV, LIPGTIALGAFTFTMDALPGT, and IYAAPWLGLMGAVIVLAAGML. The interval 209-229 is disordered; that stretch reads GEGYGGFDSQNAPAPESIESA. A compositionally biased stretch (low complexity) spans 220–229; sequence APAPESIESA. 5 consecutive transmembrane segments (helical) span residues 240–260, 286–306, 323–343, 372–392, and 448–468; these read ALAFVPLILVGAVNKYFTIYL, AAAIWSVEIALVIGIITTILF, IGGALLASMNTGAEYGFGGII, TALAGITGSASGGMGIALSAM, and IFAITLIKTAAVFAVIAIYSL.

This sequence belongs to the CitM (TC 2.A.11) transporter family.

Its subcellular location is the cell membrane. This is an uncharacterized protein from Bacillus subtilis (strain 168).